A 483-amino-acid polypeptide reads, in one-letter code: ATP synthase subunit beta (483 aa).

An ATP-binding site is contributed by 162-169; the sequence is GGAGVGKT.

The protein belongs to the ATPase alpha/beta chains family. As to quaternary structure, F-type ATPases have 2 components, CF(1) - the catalytic core - and CF(0) - the membrane proton channel. CF(1) has five subunits: alpha(3), beta(3), gamma(1), delta(1), epsilon(1). CF(0) has four main subunits: a(1), b(1), b'(1) and c(9-12).

The protein localises to the cellular thylakoid membrane. The catalysed reaction is ATP + H2O + 4 H(+)(in) = ADP + phosphate + 5 H(+)(out). Produces ATP from ADP in the presence of a proton gradient across the membrane. The catalytic sites are hosted primarily by the beta subunits. The polypeptide is ATP synthase subunit beta (Prochloron didemni).